A 124-amino-acid chain; its full sequence is Fluoride-specific ion channel FluC (124 aa).

The next 4 membrane-spanning stretches (helical) occupy residues 3–23, 34–54, 66–86, and 100–120; these read IIAI…LSIW, YGTL…LVLA, LLIV…SFET, and LYVL…AGVA. Na(+) is bound by residues Gly74 and Thr77.

Belongs to the fluoride channel Fluc/FEX (TC 1.A.43) family.

It localises to the cell membrane. It carries out the reaction fluoride(in) = fluoride(out). Its activity is regulated as follows. Na(+) is not transported, but it plays an essential structural role and its presence is essential for fluoride channel function. Functionally, fluoride-specific ion channel. Important for reducing fluoride concentration in the cell, thus reducing its toxicity. The protein is Fluoride-specific ion channel FluC of Roseiflexus sp. (strain RS-1).